The primary structure comprises 453 residues: GTPase Der (453 aa).

EngA-type G domains are found at residues 4 to 169 and 178 to 353; these read PIVA…PPAD and IGVA…EQHR. GTP-binding positions include 10-17, 57-61, 120-123, 184-191, 231-235, and 296-299; these read GRPNVGKS, DTGGL, NKCE, DTAGI, and NKWD. The region spanning 354–439 is the KH-like domain; it reads RRVGTSVINE…PIRLFWRGKK (86 aa).

Belongs to the TRAFAC class TrmE-Era-EngA-EngB-Septin-like GTPase superfamily. EngA (Der) GTPase family. Associates with the 50S ribosomal subunit.

In terms of biological role, GTPase that plays an essential role in the late steps of ribosome biogenesis. This Synechococcus sp. (strain ATCC 27144 / PCC 6301 / SAUG 1402/1) (Anacystis nidulans) protein is GTPase Der.